Consider the following 120-residue polypeptide: Photosystem II extrinsic protein U (120 aa).

A signal peptide spans 1–29; it reads MKRLLSLLTGVLVMTGLLMALIFPQSAYA.

It belongs to the PsbU family. PSII is composed of 1 copy each of membrane proteins PsbA, PsbB, PsbC, PsbD, PsbE, PsbF, PsbH, PsbI, PsbJ, PsbK, PsbL, PsbM, PsbT, PsbX, PsbY, Psb30/Ycf12, peripheral proteins PsbO, CyanoQ (PsbQ), PsbU, PsbV and a large number of cofactors. It forms dimeric complexes.

The protein resides in the cellular thylakoid membrane. Functionally, one of the extrinsic, lumenal subunits of photosystem II (PSII). PSII is a light-driven water plastoquinone oxidoreductase, using light energy to abstract electrons from H(2)O, generating a proton gradient subsequently used for ATP formation. The extrinsic proteins stabilize the structure of photosystem II oxygen-evolving complex (OEC), the ion environment of oxygen evolution and protect the OEC against heat-induced inactivation. This is Photosystem II extrinsic protein U from Prochlorococcus marinus (strain MIT 9313).